The sequence spans 310 residues: Methionyl-tRNA formyltransferase (310 aa).

109–112 (SLLP) provides a ligand contact to (6S)-5,6,7,8-tetrahydrofolate.

The protein belongs to the Fmt family.

It carries out the reaction L-methionyl-tRNA(fMet) + (6R)-10-formyltetrahydrofolate = N-formyl-L-methionyl-tRNA(fMet) + (6S)-5,6,7,8-tetrahydrofolate + H(+). Its function is as follows. Attaches a formyl group to the free amino group of methionyl-tRNA(fMet). The formyl group appears to play a dual role in the initiator identity of N-formylmethionyl-tRNA by promoting its recognition by IF2 and preventing the misappropriation of this tRNA by the elongation apparatus. The polypeptide is Methionyl-tRNA formyltransferase (Agathobacter rectalis (strain ATCC 33656 / DSM 3377 / JCM 17463 / KCTC 5835 / VPI 0990) (Eubacterium rectale)).